We begin with the raw amino-acid sequence, 126 residues long: Adenosine 5'-monophosphoramidase HINT1 (126 aa).

Alanine 2 is subject to N-acetylalanine. The 109-residue stretch at 18-126 (IFGKIIRKEI…GGRQMNWPPG (109 aa)) folds into the HIT domain. Lysine 21 and lysine 30 each carry N6-acetyllysine. 43–44 (DI) contributes to the AMP binding site. 2 positions are modified to phosphoserine: serine 45 and serine 72. AMP contacts are provided by residues asparagine 99, 105–107 (GQS), and 112–114 (HLH). The Histidine triad motif motif lies at 110 to 114 (HVHLH). Histidine 112 serves as the catalytic Tele-AMP-histidine intermediate.

It belongs to the HINT family. In terms of assembly, homodimer. Interacts with CDK7. Interacts with RUVBL1 and RUVBL2 and is associated with the LEF1/TCF1-CTNNB1 complex and with a KAT5 histone acetyltransferase complex. Identified in a complex with MITF and CTNNB1. Interacts with CDC34 and RBX1, and is part of a SCF (SKP2-CUL1-F-box protein) E3 ubiquitin-protein ligase complex. Interacts with SUMO1, SUMO2 and RGS17. Interacts with the Ten-1 ICD form of TENM1. Interacts with CALM1; interaction increases in the presence of calcium ions. Widely expressed.

The protein localises to the cytoplasm. It localises to the nucleus. The enzyme catalyses adenosine 5'-phosphoramidate + H2O = AMP + NH4(+). Functionally, exhibits adenosine 5'-monophosphoramidase activity, hydrolyzing purine nucleotide phosphoramidates with a single phosphate group such as adenosine 5'monophosphoramidate (AMP-NH2) to yield AMP and NH2. Hydrolyzes adenosine 5'monophosphomorpholidate (AMP-morpholidate) and guanosine 5'monophosphomorpholidate (GMP-morpholidate). Hydrolyzes lysyl-AMP (AMP-N-epsilon-(N-alpha-acetyl lysine methyl ester)) generated by lysine tRNA ligase. Hydrolyzes Met-AMP, His-AMP, Asp-AMP, lysyl-GMP (GMP-N-epsilon-(N-alpha-acetyl lysine methyl ester)) and AMP-N-alanine methyl ester. Can also convert adenosine 5'-O-phosphorothioate and guanosine 5'-O-phosphorothioate to the corresponding nucleoside 5'-O-phosphates with concomitant release of hydrogen sulfide. In addition, functions as a scaffolding protein that modulates transcriptional activation by the LEF1/TCF1-CTNNB1 complex and by the complex formed with MITF and CTNNB1. Modulates p53/TP53 levels and p53/TP53-mediated apoptosis. Modulates proteasomal degradation of target proteins by the SCF (SKP2-CUL1-F-box protein) E3 ubiquitin-protein ligase complex. Also exhibits SUMO-specific isopeptidase activity, deconjugating SUMO1 from RANGAP1 and RGS17. In Oryctolagus cuniculus (Rabbit), this protein is Adenosine 5'-monophosphoramidase HINT1 (HINT1).